The sequence spans 496 residues: GTPase Der (496 aa).

EngA-type G domains follow at residues 3 to 168 (PIIA…VPEK) and 210 to 383 (IKLA…DCST). GTP-binding positions include 9-16 (GRPNVGKS), 56-60 (DTGGI), 120-123 (NKID), 216-223 (GRPNVGKS), 263-267 (DTAGV), and 328-331 (NKWD). The 85-residue stretch at 384–468 (KRINTSLLTR…PIRIQFKESE (85 aa)) folds into the KH-like domain.

This sequence belongs to the TRAFAC class TrmE-Era-EngA-EngB-Septin-like GTPase superfamily. EngA (Der) GTPase family. As to quaternary structure, associates with the 50S ribosomal subunit.

GTPase that plays an essential role in the late steps of ribosome biogenesis. This is GTPase Der from Hamiltonella defensa subsp. Acyrthosiphon pisum (strain 5AT).